A 321-amino-acid polypeptide reads, in one-letter code: Lipoyl synthase (321 aa).

Residues cysteine 68, cysteine 73, cysteine 79, cysteine 94, cysteine 98, cysteine 101, and serine 308 each coordinate [4Fe-4S] cluster. The 218-residue stretch at 80-297 folds into the Radical SAM core domain; it reads FNHGTATFMI…KQEALAMGFT (218 aa).

The protein belongs to the radical SAM superfamily. Lipoyl synthase family. [4Fe-4S] cluster is required as a cofactor.

Its subcellular location is the cytoplasm. It carries out the reaction [[Fe-S] cluster scaffold protein carrying a second [4Fe-4S](2+) cluster] + N(6)-octanoyl-L-lysyl-[protein] + 2 oxidized [2Fe-2S]-[ferredoxin] + 2 S-adenosyl-L-methionine + 4 H(+) = [[Fe-S] cluster scaffold protein] + N(6)-[(R)-dihydrolipoyl]-L-lysyl-[protein] + 4 Fe(3+) + 2 hydrogen sulfide + 2 5'-deoxyadenosine + 2 L-methionine + 2 reduced [2Fe-2S]-[ferredoxin]. The protein operates within protein modification; protein lipoylation via endogenous pathway; protein N(6)-(lipoyl)lysine from octanoyl-[acyl-carrier-protein]: step 2/2. Its function is as follows. Catalyzes the radical-mediated insertion of two sulfur atoms into the C-6 and C-8 positions of the octanoyl moiety bound to the lipoyl domains of lipoate-dependent enzymes, thereby converting the octanoylated domains into lipoylated derivatives. The polypeptide is Lipoyl synthase (Sodalis glossinidius (strain morsitans)).